The chain runs to 250 residues: uncharacterized protein (250 aa).

2 disordered regions span residues 85–107 (NQFP…QSEP) and 158–198 (EPVP…AKVP). Residues 167–176 (PAVEQPQVKQ) are compositionally biased toward low complexity.

This is an uncharacterized protein from Mycoplasma pneumoniae (strain ATCC 29342 / M129 / Subtype 1) (Mycoplasmoides pneumoniae).